A 576-amino-acid chain; its full sequence is Arginine--tRNA ligase (576 aa).

A 'HIGH' region motif is present at residues 126–136 (ANPTGPMHIGH).

Belongs to the class-I aminoacyl-tRNA synthetase family. As to quaternary structure, monomer.

Its subcellular location is the cytoplasm. It carries out the reaction tRNA(Arg) + L-arginine + ATP = L-arginyl-tRNA(Arg) + AMP + diphosphate. In Rickettsia bellii (strain OSU 85-389), this protein is Arginine--tRNA ligase.